We begin with the raw amino-acid sequence, 318 residues long: Aspartate carbamoyltransferase catalytic subunit (318 aa).

Residues Arg-58 and Thr-59 each coordinate carbamoyl phosphate. Lys-86 lines the L-aspartate pocket. Carbamoyl phosphate contacts are provided by Arg-108, His-141, and Gln-144. Residues Arg-174 and Arg-226 each contribute to the L-aspartate site. Carbamoyl phosphate-binding residues include Gly-270 and Pro-271.

The protein belongs to the aspartate/ornithine carbamoyltransferase superfamily. ATCase family. In terms of assembly, heterododecamer (2C3:3R2) of six catalytic PyrB chains organized as two trimers (C3), and six regulatory PyrI chains organized as three dimers (R2).

The enzyme catalyses carbamoyl phosphate + L-aspartate = N-carbamoyl-L-aspartate + phosphate + H(+). It participates in pyrimidine metabolism; UMP biosynthesis via de novo pathway; (S)-dihydroorotate from bicarbonate: step 2/3. Catalyzes the condensation of carbamoyl phosphate and aspartate to form carbamoyl aspartate and inorganic phosphate, the committed step in the de novo pyrimidine nucleotide biosynthesis pathway. This Lactobacillus delbrueckii subsp. bulgaricus (strain ATCC BAA-365 / Lb-18) protein is Aspartate carbamoyltransferase catalytic subunit.